The following is a 286-amino-acid chain: UDP-3-O-acyl-N-acetylglucosamine deacetylase (286 aa).

Residues His-79, His-237, and Asp-241 each coordinate Zn(2+). Catalysis depends on His-264, which acts as the Proton donor.

The protein belongs to the LpxC family. It depends on Zn(2+) as a cofactor.

It catalyses the reaction a UDP-3-O-[(3R)-3-hydroxyacyl]-N-acetyl-alpha-D-glucosamine + H2O = a UDP-3-O-[(3R)-3-hydroxyacyl]-alpha-D-glucosamine + acetate. The protein operates within glycolipid biosynthesis; lipid IV(A) biosynthesis; lipid IV(A) from (3R)-3-hydroxytetradecanoyl-[acyl-carrier-protein] and UDP-N-acetyl-alpha-D-glucosamine: step 2/6. Catalyzes the hydrolysis of UDP-3-O-myristoyl-N-acetylglucosamine to form UDP-3-O-myristoylglucosamine and acetate, the committed step in lipid A biosynthesis. The polypeptide is UDP-3-O-acyl-N-acetylglucosamine deacetylase (Chlamydia muridarum (strain MoPn / Nigg)).